The sequence spans 1034 residues: MLKTGKKFHYTAPANGYPEWNNNPEIFQLNRSKAHALLMPYQTVEEALKNDRKSSVYYQSLNGSWYFHFAENADGRVKNFFAPEFSYEKWDSISVPSHWQLQGYDYPQYTNVTYPWVENEELEPPFAPTKYNPVGQYVRTFTPKSEWKDQPVYISFQGVESAFYVWINGEFVGYSEDSFTPAEFDITSYLQEGENTIAVEVYRWSDASWLEDQDFWRMSGIFRDVYLYSTPQVHIYDFSVRSSLDNNYEDGELSVSADILNYFEHDTQDLTFEVMLYDANAQEVLQAPLQTNLSVSDQRTVSLRTHIKSPAKWSAESPNLYTLVLSLKNAAGSIIETESCKVGFRTFEIKNGLMTINGKRIVLRGVNRHEFDSVKGRAGITREDMIHDILLMKQHNINAVRTSHYPNDSVWYELCNEYGLYVIDETNLETHGTWTYLQEGEQKAVPGSKPEWKENVLDRCRSMYERDKNHPSIIIWSLGNESFGGENFQHMYTFFKEKDSTRLVHYEGIFHHRDYDASDIESTMYVKPADVERYALMNPKKPYILCEYSHAMGNSCGNLYKYWELFDQYPILQGGFIWDWKDQALQATAEDGTSYLAYGGDFGDTPNDGNFCGNGLIFADGTASPKIAEVKKCYQPVKWTAVDPAKGKFAVQNKHLFTNLNAYDFVWTVEKNGELVEKHASLLNVAPDGTDELTLSYPLYEQENETDEFVLTLSLRLSKDTAWASAGYEVAYEQFVLPAKAAMPSVKAAHPALTVDQNEQTLTVTGTNFTAIFDKRKGQFISYNYERTELLASGFRPNFWRAVTDNDLGNKLHERCQTWRQASLEQHVKKVTVQPQVDFVIISVELALDNSLASCYVTYTLYNDGEMKIEQSLAPSETMPEIPEIGMLFTMNAAFDSLTWYGRGPHENYWDRKTGAKLALHKGSVKEQVTPYLRPQECGNKTDVRWATITNDQGRGFLIKGLPTVELNALPYSPFELEAYDHFYKLPASDSVTVRVNYKQMGVGGDDSWQAKTHPNYTLYANRSYTNTFTLKPL.

The Proton donor role is filled by E481. The active-site Nucleophile is E547.

This sequence belongs to the glycosyl hydrolase 2 family.

It catalyses the reaction Hydrolysis of terminal non-reducing beta-D-galactose residues in beta-D-galactosides.. The protein is Beta-galactosidase (bgaM) of Priestia megaterium (strain DSM 319 / IMG 1521) (Bacillus megaterium).